We begin with the raw amino-acid sequence, 480 residues long: MLHRNRFLVLLALAGLLAFLSLSLQFFHLIPVSATKNGGSSKSRKRIMPDPVTEPPTVDPVYEALLYCNIPSVAEHSMEGHAPHHYKLVSVHVFIRHGDRYPLYAIPKTKRPEIDCTLVASRKPYHPKLEAFISHMLKGSGASFESPLNSLPLYPNHPLCETGELTQTGVVQHLLNGQLLRDIYLRKHKLLPNNWSSDQLYLESTGKSRTLQSGLALLYGFLPEFDWKKVYFKHQPSALFCSGSCYCPLRNQYLEKEQRRQYLLRLKNSDLERTYGEMAKIVDIPTKQLRAANPIDSMLCHFCHNVSFPCSRSGCLGMEHFKVIKTHQIEDERERHEKLLYFGYSLLGAHPILNQTVNRMQRAASGWRDELFTLYSAHDVTLSPILSALGLLEARFPRFAARLVFELWQDRQKPSEHSVRILYNGADVTFHTSFCHDFHKRSPKPMCPLENLVRFVKRDMFVALDGSSTNYYDACHGEGA.

Topologically, residues 1-6 are cytoplasmic; the sequence is MLHRNR. Residues 7 to 27 form a helical; Signal-anchor for type II membrane protein membrane-spanning segment; the sequence is FLVLLALAGLLAFLSLSLQFF. Residues 28–480 are Lumenal-facing; the sequence is HLIPVSATKN…YYDACHGEGA (453 aa). His-97 acts as the Nucleophile in catalysis. N-linked (GlcNAc...) asparagine glycosylation is found at Asn-194, Asn-305, and Asn-354. Asp-379 functions as the Proton donor in the catalytic mechanism.

It belongs to the histidine acid phosphatase family. Interacts with B3GAT3; the interaction increases the 2-phosphoxylose phosphatase activity of PXYLP1 during completion of linkage region formation in a B3GAT3-mediated manner.

The protein localises to the golgi apparatus membrane. It catalyses the reaction 3-O-[beta-D-GlcA-(1-&gt;3)-beta-D-Gal-(1-&gt;3)-beta-D-Gal-(1-&gt;4)-beta-D-2-O-P-Xyl]-L-seryl-[protein] + H2O = 3-O-(beta-D-GlcA-(1-&gt;3)-beta-D-Gal-(1-&gt;3)-beta-D-Gal-(1-&gt;4)-beta-D-Xyl)-L-seryl-[protein] + phosphate. Its function is as follows. Responsible for the 2-O-dephosphorylation of xylose in the glycosaminoglycan-protein linkage region of proteoglycans thereby regulating the amount of mature glycosaminoglycan (GAG) chains. Sulfated glycosaminoglycans (GAGs), including heparan sulfate and chondroitin sulfate, are synthesized on the so-called common GAG-protein linkage region (GlcUAbeta1-3Galbeta1-3Galbeta1-4Xylbeta1-O-Ser) of core proteins, which is formed by the stepwise addition of monosaccharide residues by the respective specific glycosyltransferases. Xylose 2-O-dephosphorylation during completion of linkage region formation is a prerequisite for the initiation and efficient elongation of the repeating disaccharide region of GAG chains. The sequence is that of 2-phosphoxylose phosphatase 1 from Mus musculus (Mouse).